We begin with the raw amino-acid sequence, 366 residues long: Peptide chain release factor 2 (366 aa).

Q251 carries the N5-methylglutamine modification.

This sequence belongs to the prokaryotic/mitochondrial release factor family. Post-translationally, methylated by PrmC. Methylation increases the termination efficiency of RF2.

The protein resides in the cytoplasm. In terms of biological role, peptide chain release factor 2 directs the termination of translation in response to the peptide chain termination codons UGA and UAA. The polypeptide is Peptide chain release factor 2 (prfB) (Listeria innocua serovar 6a (strain ATCC BAA-680 / CLIP 11262)).